Here is a 57-residue protein sequence, read N- to C-terminus: UPF0391 membrane protein Patl_0263 (57 aa).

2 consecutive transmembrane segments (helical) span residues 8–28 and 30–50; these read FFVL…GVAA and IAKV…VLAF.

The protein belongs to the UPF0391 family.

It localises to the cell membrane. The sequence is that of UPF0391 membrane protein Patl_0263 from Pseudoalteromonas atlantica (strain T6c / ATCC BAA-1087).